The following is a 215-amino-acid chain: BAG family molecular chaperone regulator 5, mitochondrial (215 aa).

The N-terminal 14 residues, 1 to 14 (MKRSRKFSSSTTTT), are a transit peptide targeting the mitochondrion. In terms of domain architecture, IQ spans 50-79 (ATAAAARIQSGYRSYRIRNLYKKISSINRE). The region spanning 72–149 (KISSINREAN…GMQEILDSIS (78 aa)) is the BAG domain.

As to quaternary structure, binds to the ATPase domain of HSP70/HSC70 chaperones. Interacts with HSP70-1.

The protein localises to the mitochondrion. Its function is as follows. Co-chaperone that regulates diverse cellular pathways, such as programmed cell death and stress responses. In Arabidopsis thaliana (Mouse-ear cress), this protein is BAG family molecular chaperone regulator 5, mitochondrial (BAG5).